The following is a 221-amino-acid chain: Octanoyltransferase (221 aa).

Residues 38–220 (GEIPDTLLLL…GFREVLGDPG (183 aa)) form the BPL/LPL catalytic domain. Residues 84–91 (RGGDATFH), 149–151 (AIG), and 163–165 (GFA) contribute to the substrate site. The active-site Acyl-thioester intermediate is Cys181.

Belongs to the LipB family.

The protein localises to the cytoplasm. It carries out the reaction octanoyl-[ACP] + L-lysyl-[protein] = N(6)-octanoyl-L-lysyl-[protein] + holo-[ACP] + H(+). The protein operates within protein modification; protein lipoylation via endogenous pathway; protein N(6)-(lipoyl)lysine from octanoyl-[acyl-carrier-protein]: step 1/2. Its function is as follows. Catalyzes the transfer of endogenously produced octanoic acid from octanoyl-acyl-carrier-protein onto the lipoyl domains of lipoate-dependent enzymes. Lipoyl-ACP can also act as a substrate although octanoyl-ACP is likely to be the physiological substrate. The protein is Octanoyltransferase of Rubrobacter xylanophilus (strain DSM 9941 / JCM 11954 / NBRC 16129 / PRD-1).